The following is a 464-amino-acid chain: MDNNSNKRMGRPHVVVIPYPAQGHVLPLISFSRYLAKQGIQITFINTEFNHNRIISSLPNSPHEDYVGDQINLVSIPDGLEDSPEERNIPGKLSESVLRFMPKKVEELIERMMAETSGGTIISCVVADQSLGWAIEVAAKFGIRRTAFCPAAAASMVLGFSIQKLIDDGLIDSDGTVRVNKTIQLSPGMPKMETDKFVWVCLKNKESQKNIFQLMLQNNNSIESTDWLLCNSVHELETAAFGLGPNIVPIGPIGWAHSLEEGSTSLGSFLPHDRDCLDWLDRQIPGSVIYVAFGSFGVMGNPQLEELAIGLELTKRPVLWVTGDQQPIKLGSDRVKVVRWAPQREVLSSGAIGCFVSHCGWNSTLEGAQNGIPFLCIPYFADQFINKAYICDVWKIGLGLERDARGVVPRLEVKKKIDEIMRDGGEYEERAMKVKEIVMKSVAKDGISCENLNKFVNWIKSQVN.

UDP-alpha-D-glucose contacts are provided by residues Ser-295, Ala-341 to Gln-343, His-358 to Glu-366, and Phe-380 to Gln-383.

The protein belongs to the UDP-glycosyltransferase family.

The protein is UDP-glycosyltransferase 83A1 (UGT83A1) of Arabidopsis thaliana (Mouse-ear cress).